We begin with the raw amino-acid sequence, 868 residues long: Leucine--tRNA ligase (868 aa).

A 'HIGH' region motif is present at residues 42–52; that stretch reads PYPSGKLHMGH. The 'KMSKS' region signature appears at 627–631; sequence KMAKS. Lysine 630 provides a ligand contact to ATP.

It belongs to the class-I aminoacyl-tRNA synthetase family.

The protein resides in the cytoplasm. The catalysed reaction is tRNA(Leu) + L-leucine + ATP = L-leucyl-tRNA(Leu) + AMP + diphosphate. The chain is Leucine--tRNA ligase from Pseudomonas fluorescens (strain ATCC BAA-477 / NRRL B-23932 / Pf-5).